The chain runs to 134 residues: Profilin-4 (134 aa).

C13 and C118 are disulfide-bonded. The short motif at 84–100 is the Involved in PIP2 interaction element; that stretch reads AVIRGKKGSGGITIKKT. T114 bears the Phosphothreonine mark.

Belongs to the profilin family. Occurs in many kinds of cells as a complex with monomeric actin in a 1:1 ratio. In terms of processing, phosphorylated by MAP kinases.

Its subcellular location is the cytoplasm. The protein localises to the cytoskeleton. In terms of biological role, binds to actin and affects the structure of the cytoskeleton. At high concentrations, profilin prevents the polymerization of actin, whereas it enhances it at low concentrations. This Olea europaea (Common olive) protein is Profilin-4.